A 143-amino-acid chain; its full sequence is Insertion element IS2 uncharacterized 16.4 kDa protein (143 aa).

This chain is Insertion element IS2 uncharacterized 16.4 kDa protein, found in Escherichia coli.